The chain runs to 338 residues: Lipoate-protein ligase A (338 aa).

The 188-residue stretch at 29–216 (PATQRVLFLW…AFFAHYGERV (188 aa)) folds into the BPL/LPL catalytic domain. ATP contacts are provided by residues arginine 71, 76 to 79 (GAVF), and lysine 134. (R)-lipoate is bound at residue lysine 134.

The protein belongs to the LplA family. Monomer.

It is found in the cytoplasm. It catalyses the reaction L-lysyl-[lipoyl-carrier protein] + (R)-lipoate + ATP = N(6)-[(R)-lipoyl]-L-lysyl-[lipoyl-carrier protein] + AMP + diphosphate + H(+). It participates in protein modification; protein lipoylation via exogenous pathway; protein N(6)-(lipoyl)lysine from lipoate: step 1/2. The protein operates within protein modification; protein lipoylation via exogenous pathway; protein N(6)-(lipoyl)lysine from lipoate: step 2/2. Its function is as follows. Catalyzes both the ATP-dependent activation of exogenously supplied lipoate to lipoyl-AMP and the transfer of the activated lipoyl onto the lipoyl domains of lipoate-dependent enzymes. The chain is Lipoate-protein ligase A from Escherichia coli (strain SMS-3-5 / SECEC).